The primary structure comprises 112 residues: Macrodomain Ori protein (112 aa).

Positions F91–D112 are disordered. Acidic residues predominate over residues G103–D112.

The protein belongs to the MaoP family.

Functionally, involved in the organization of the Ori region of the chromosome into a macrodomain (MD). It constrains DNA mobility in the Ori macrodomain and limits long-distance DNA interactions with other chromosomal regions. This Escherichia coli O157:H7 protein is Macrodomain Ori protein.